The chain runs to 413 residues: MSESRTVERSVRSNRKIKFALMGPAFIAAIGYIDPGNFATNIQAGASYGYQLLWVVVWANVMAMVIQLMSAKLGIATGKNLAEHIRDRFPRPAVWFYWVQAEIIAMATDLAEFIGAAIGFKLVFGVTLLQGAMLTGVATFLILMLQNRGQKPLELVIGGLLLFVAAAYVIELFFSQPKVVDLLQGMAVPSLPTADAVLLAAGVLGATIMPHVIYLHSSLTQNSGDQGSRSERYSSTKLDVAIAMTIAGFVNLAMMATAAATFHFSGHSGVADLDQAYLTLDPLLGKAAALVFGLSLLAAGLSSTVVGTMAGQVVMQGFIHFHIPLLLRRVITMLPSFIVILAGWEPTRILVMSQVLLSFGIALALIPLLAFTGNPGLMGDMVNSRLMQNFGRLIVVVVIALNGYLLVAMALNL.

The next 11 helical transmembrane spans lie at 19–39, 49–69, 94–114, 122–142, 155–175, 196–216, 240–260, 287–307, 323–343, 349–369, and 393–413; these read FALMGPAFIAAIGYIDPGNFA, GYQLLWVVVWANVMAMVIQLM, VWFYWVQAEIIAMATDLAEFI, LVFGVTLLQGAMLTGVATFLI, LVIGGLLLFVAAAYVIELFFS, AVLLAAGVLGATIMPHVIYLH, VAIAMTIAGFVNLAMMATAAA, AAALVFGLSLLAAGLSSTVVG, IPLLLRRVITMLPSFIVILAG, ILVMSQVLLSFGIALALIPLL, and LIVVVVIALNGYLLVAMALNL.

Belongs to the NRAMP family.

Its subcellular location is the cell inner membrane. Its function is as follows. H(+)-stimulated, divalent metal cation uptake system. The chain is Divalent metal cation transporter MntH from Erwinia tasmaniensis (strain DSM 17950 / CFBP 7177 / CIP 109463 / NCPPB 4357 / Et1/99).